The sequence spans 175 residues: Nucleoside-triphosphatase THEP1 (175 aa).

ATP contacts are provided by residues glycine 8 to serine 15 and leucine 99 to glycine 106.

Belongs to the THEP1 NTPase family.

The catalysed reaction is a ribonucleoside 5'-triphosphate + H2O = a ribonucleoside 5'-diphosphate + phosphate + H(+). Functionally, has nucleotide phosphatase activity towards ATP, GTP, CTP, TTP and UTP. May hydrolyze nucleoside diphosphates with lower efficiency. In Methanosarcina acetivorans (strain ATCC 35395 / DSM 2834 / JCM 12185 / C2A), this protein is Nucleoside-triphosphatase THEP1.